A 399-amino-acid polypeptide reads, in one-letter code: MGNHTLLKQINKLLVLKTILDNKIISRTKISKLVDLNKATVSNLTDELIKEGYVVEKGYGKSKGGRRPVLLQVNKDVGSIIGIDLGVDYIHIILSNFVGEVIFEEYANMKIGEDKEKLLRLLFDLIEKSVKKAPQTPKGILGIGIGVPGIIEKESGTVLLAPNLKWQNVPLRSIVQQKFNLPVYIDNEANAGALGEKWFGEWGKVSDLIYLSVGIGLGAGIIIDNKLFRGAAGFAGEVGHTTINFQDDVCSCGNIGCLENFASERALLSVIKKLVKQGVEDRYISWENVDEITPSRIIQAAKEGSRVCRMAILEVAEKMGIGVANLVNIFNPEMVIIGNKASFFGELFLEKLREVINQRSFIAQFYNLKIEVSKLKDRAVVLGCIAMVISDMLSFPEYA.

A DNA-binding region (H-T-H motif) is located at residues 27-46 (RTKISKLVDLNKATVSNLTD).

Belongs to the ROK (NagC/XylR) family.

Transcriptional repressor of xylose-utilizing enzymes. In Caldicellulosiruptor bescii (strain ATCC BAA-1888 / DSM 6725 / KCTC 15123 / Z-1320) (Anaerocellum thermophilum), this protein is Xylose repressor (xylR).